The sequence spans 42 residues: Iota-conotoxin-like R11.15 (42 aa).

Intrachain disulfides connect Cys5–Cys19, Cys12–Cys22, Cys18–Cys27, and Cys21–Cys36.

The protein belongs to the conotoxin I1 superfamily. As to expression, expressed by the venom duct.

The protein localises to the secreted. Functionally, iota-conotoxins bind to voltage-gated sodium channels (Nav) and act as agonists by shifting the voltage-dependence of activation to more hyperpolarized levels. Produces general excitatory symptoms. This Conus radiatus (Rayed cone) protein is Iota-conotoxin-like R11.15.